Reading from the N-terminus, the 264-residue chain is Small ribosomal subunit protein uS2 (264 aa).

The interval 222–246 is disordered; it reads GRSENKDEQNEQGEQIAPVTNEEKQ.

This sequence belongs to the universal ribosomal protein uS2 family.

The chain is Small ribosomal subunit protein uS2 from Helicobacter hepaticus (strain ATCC 51449 / 3B1).